The following is a 152-amino-acid chain: Ribosome maturation factor RimP (152 aa).

Belongs to the RimP family.

Its subcellular location is the cytoplasm. Functionally, required for maturation of 30S ribosomal subunits. The protein is Ribosome maturation factor RimP of Pseudoalteromonas atlantica (strain T6c / ATCC BAA-1087).